The primary structure comprises 677 residues: AP-2 complex subunit beta (677 aa).

Residues 597 to 677 (RLRTRDSNPS…PMTPETHLMD (81 aa)) are disordered. The span at 616-627 (KKYNHFHQKSQT) shows a compositional bias: basic residues. Residues 636 to 654 (RNSWNPSPFSDESNSNTFS) show a composition bias toward polar residues.

This sequence belongs to the adaptor complexes large subunit family. In terms of assembly, adaptor protein complex 2 (AP-2) is a heterotetramer composed of two large adaptins (alpha-type subunit apl3 and beta-type subunit apl1), a medium chain (mu-type subunit apm4) and a small adaptin (sigma-type subunit aps2).

The protein localises to the cell membrane. The protein resides in the membrane. It localises to the coated pit. Functionally, adaptins are components of the adaptor complexes which link clathrin to receptors in coated vesicles. Clathrin-associated protein complexes are believed to interact with the cytoplasmic tails of membrane proteins, leading to their selection and concentration. Beta adaptin is a subunit of the plasma membrane adaptor. The polypeptide is AP-2 complex subunit beta (apl1) (Schizosaccharomyces pombe (strain 972 / ATCC 24843) (Fission yeast)).